Consider the following 440-residue polypeptide: Xylose isomerase (440 aa).

Residues His-101 and Asp-104 contribute to the active site. Residues Glu-232, Glu-268, His-271, Asp-296, Asp-307, Asp-309, and Asp-339 each coordinate Mg(2+).

The protein belongs to the xylose isomerase family. In terms of assembly, homotetramer. Mg(2+) serves as cofactor.

Its subcellular location is the cytoplasm. It catalyses the reaction alpha-D-xylose = alpha-D-xylulofuranose. This is Xylose isomerase from Escherichia coli (strain SMS-3-5 / SECEC).